We begin with the raw amino-acid sequence, 304 residues long: Oxygen-dependent coproporphyrinogen-III oxidase (304 aa).

Residue S94 participates in substrate binding. A divalent metal cation contacts are provided by H98 and H108. H108 (proton donor) is an active-site residue. 110–112 is a substrate binding site; that stretch reads NVR. The a divalent metal cation site is built by H147 and H177. The segment at 242–277 is important for dimerization; the sequence is YVEFNLVYDRGTLFGLQTGGRTESILMSMPPLVRWE. 260–262 provides a ligand contact to substrate; that stretch reads GGR.

Belongs to the aerobic coproporphyrinogen-III oxidase family. Homodimer. Requires a divalent metal cation as cofactor.

It is found in the cytoplasm. The enzyme catalyses coproporphyrinogen III + O2 + 2 H(+) = protoporphyrinogen IX + 2 CO2 + 2 H2O. Its pathway is porphyrin-containing compound metabolism; protoporphyrin-IX biosynthesis; protoporphyrinogen-IX from coproporphyrinogen-III (O2 route): step 1/1. Involved in the heme biosynthesis. Catalyzes the aerobic oxidative decarboxylation of propionate groups of rings A and B of coproporphyrinogen-III to yield the vinyl groups in protoporphyrinogen-IX. The polypeptide is Oxygen-dependent coproporphyrinogen-III oxidase (Shewanella pealeana (strain ATCC 700345 / ANG-SQ1)).